The chain runs to 431 residues: Enolase (431 aa).

Gln164 lines the (2R)-2-phosphoglycerate pocket. The Proton donor role is filled by Glu206. Mg(2+) is bound by residues Asp243, Glu286, and Asp313. Residues Lys338, Arg367, Ser368, and Lys389 each coordinate (2R)-2-phosphoglycerate. Lys338 serves as the catalytic Proton acceptor.

Belongs to the enolase family. Mg(2+) serves as cofactor.

The protein resides in the cytoplasm. It localises to the secreted. Its subcellular location is the cell surface. The enzyme catalyses (2R)-2-phosphoglycerate = phosphoenolpyruvate + H2O. Its pathway is carbohydrate degradation; glycolysis; pyruvate from D-glyceraldehyde 3-phosphate: step 4/5. Catalyzes the reversible conversion of 2-phosphoglycerate (2-PG) into phosphoenolpyruvate (PEP). It is essential for the degradation of carbohydrates via glycolysis. This is Enolase from Chloroflexus aggregans (strain MD-66 / DSM 9485).